A 190-amino-acid chain; its full sequence is Imidazoleglycerol-phosphate dehydratase (190 aa).

This sequence belongs to the imidazoleglycerol-phosphate dehydratase family.

The protein localises to the cytoplasm. The enzyme catalyses D-erythro-1-(imidazol-4-yl)glycerol 3-phosphate = 3-(imidazol-4-yl)-2-oxopropyl phosphate + H2O. The protein operates within amino-acid biosynthesis; L-histidine biosynthesis; L-histidine from 5-phospho-alpha-D-ribose 1-diphosphate: step 6/9. The chain is Imidazoleglycerol-phosphate dehydratase from Sulfurovum sp. (strain NBC37-1).